The chain runs to 487 residues: Zinc finger and BTB domain-containing protein 32 (487 aa).

Positions 29–87 constitute a BTB domain; that stretch reads CDTLITVGSQEFPAHSLVLAGVSQQLGRRGQWALGEGISPSTFAQLLNFVYGESVELQP. The span at 112-166 shows a compositional bias: basic and acidic residues; it reads ARGDRAKKPDPGLKKHQEEPEKPSRNPERELGDPGEKQKPEQVSRTGGREQEMLH. 2 disordered regions span residues 112–244 and 308–371; these read ARGD…TSVT and QNQL…ARSR. The span at 308–320 shows a compositional bias: polar residues; sequence QNQLASSSPTPGS. Residues 357–369 show a composition bias toward pro residues; sequence PPRPHPPPAPPAR. 3 C2H2-type zinc fingers span residues 373–395, 401–423, and 428–450; these read YACS…YRVH, FSCS…LRTH, and YRCS…MRGH. The disordered stretch occupies residues 468 to 487; sequence SSSRPSRPSTSPCCPSSSTT.

It belongs to the krueppel C2H2-type zinc-finger protein family. In terms of assembly, homodimer (via PTB domain). Interacts with the N-terminal of FANCC. Interacts with ZBTB16. Interacts with GATA3. In terms of tissue distribution, predominantly expressed in testis. Some isoforms are ubiquitously expressed.

Its subcellular location is the nucleus. Functionally, DNA-binding protein that binds to the to a 5'-TGTACAGTGT-3' core sequence. May function as a transcriptional transactivator and transcriptional repressor. Probably exerts its repressor effect by preventing GATA3 from binding to DNA. May play a role in regulating the differentiation and activation of helper T-cells. The protein is Zinc finger and BTB domain-containing protein 32 (ZBTB32) of Homo sapiens (Human).